The chain runs to 362 residues: Probable protein phosphatase 2C 24 (362 aa).

The region spanning 77–360 (RYGVSSVCGR…DNVSVVVIDL (284 aa)) is the PPM-type phosphatase domain. 4 residues coordinate Mn(2+): aspartate 117, glycine 118, aspartate 295, and aspartate 351.

Belongs to the PP2C family. Requires Mg(2+) as cofactor. It depends on Mn(2+) as a cofactor.

The catalysed reaction is O-phospho-L-seryl-[protein] + H2O = L-seryl-[protein] + phosphate. It catalyses the reaction O-phospho-L-threonyl-[protein] + H2O = L-threonyl-[protein] + phosphate. The chain is Probable protein phosphatase 2C 24 from Arabidopsis thaliana (Mouse-ear cress).